The following is a 566-amino-acid chain: Membrane protein insertase YidC (566 aa).

A helical membrane pass occupies residues 7–27 (ILIVALAIVSYVMVLKWNQDY). The segment at 38–72 (ASSTTAPGLPDAPTGTSAANDDIPRAASDTTAPAE) is disordered. 5 helical membrane passes run 347-367 (LELT…FWLL), 373-393 (LVGN…GIFF), 443-463 (LGGC…YWVL), 474-494 (FMLW…PIIM), and 521-541 (PIIF…YWVV).

This sequence belongs to the OXA1/ALB3/YidC family. Type 1 subfamily. In terms of assembly, interacts with the Sec translocase complex via SecD. Specifically interacts with transmembrane segments of nascent integral membrane proteins during membrane integration.

Its subcellular location is the cell inner membrane. In terms of biological role, required for the insertion and/or proper folding and/or complex formation of integral membrane proteins into the membrane. Involved in integration of membrane proteins that insert both dependently and independently of the Sec translocase complex, as well as at least some lipoproteins. Aids folding of multispanning membrane proteins. The polypeptide is Membrane protein insertase YidC (Pseudomonas fluorescens (strain ATCC BAA-477 / NRRL B-23932 / Pf-5)).